A 430-amino-acid chain; its full sequence is Enolase (430 aa).

A (2R)-2-phosphoglycerate-binding site is contributed by Gln167. Glu209 serves as the catalytic Proton donor. Mg(2+) is bound by residues Asp246, Glu287, and Asp314. Positions 339, 368, 369, and 390 each coordinate (2R)-2-phosphoglycerate. The active-site Proton acceptor is the Lys339.

Belongs to the enolase family. Requires Mg(2+) as cofactor.

The protein localises to the cytoplasm. The protein resides in the secreted. Its subcellular location is the cell surface. It catalyses the reaction (2R)-2-phosphoglycerate = phosphoenolpyruvate + H2O. It functions in the pathway carbohydrate degradation; glycolysis; pyruvate from D-glyceraldehyde 3-phosphate: step 4/5. Its function is as follows. Catalyzes the reversible conversion of 2-phosphoglycerate (2-PG) into phosphoenolpyruvate (PEP). It is essential for the degradation of carbohydrates via glycolysis. This Prochlorococcus marinus (strain MIT 9515) protein is Enolase.